We begin with the raw amino-acid sequence, 156 residues long: 6,7-dimethyl-8-ribityllumazine synthase (156 aa).

5-amino-6-(D-ribitylamino)uracil is bound by residues Phe-23, 57–59 (AYE), and 81–83 (AII). 86-87 (GT) provides a ligand contact to (2S)-2-hydroxy-3-oxobutyl phosphate. His-89 serves as the catalytic Proton donor. 5-amino-6-(D-ribitylamino)uracil is bound at residue Phe-114. Arg-128 provides a ligand contact to (2S)-2-hydroxy-3-oxobutyl phosphate.

The protein belongs to the DMRL synthase family.

The enzyme catalyses (2S)-2-hydroxy-3-oxobutyl phosphate + 5-amino-6-(D-ribitylamino)uracil = 6,7-dimethyl-8-(1-D-ribityl)lumazine + phosphate + 2 H2O + H(+). It participates in cofactor biosynthesis; riboflavin biosynthesis; riboflavin from 2-hydroxy-3-oxobutyl phosphate and 5-amino-6-(D-ribitylamino)uracil: step 1/2. Functionally, catalyzes the formation of 6,7-dimethyl-8-ribityllumazine by condensation of 5-amino-6-(D-ribitylamino)uracil with 3,4-dihydroxy-2-butanone 4-phosphate. This is the penultimate step in the biosynthesis of riboflavin. This Helicobacter pylori (strain HPAG1) protein is 6,7-dimethyl-8-ribityllumazine synthase.